The chain runs to 317 residues: MAIDYDKHIPVLLNEAVTALNIKKDGIYIDGTFGRGGHSRLILSKLGNKGRLLAIDRDPAAIAAGRNIHDLRFTIVQRPFSTIADYIAELNLIGCIDGILLDLGISSPQLADPDRGFSFRHNGKLDMRMDTTCGISAREWLKQASVQEMTWVLQHFGEERFAKRISQAIFHQNRRRLITSTSELAKLITTIVPWSNKHKHPATRSFQAIRIYINNELKEIEQVLNSALNILAIGGKLVVISFHSLEDRLVKYFINKHSKLPLPPTGISLTEKQIADLYKNRHLTLKNLGKIRPSIQEIKVNPRARSALLRFAEKLDI.

S-adenosyl-L-methionine is bound by residues 36–38 (GGH), Asp-56, Phe-80, Asp-102, and Gln-109.

The protein belongs to the methyltransferase superfamily. RsmH family.

The protein localises to the cytoplasm. The enzyme catalyses cytidine(1402) in 16S rRNA + S-adenosyl-L-methionine = N(4)-methylcytidine(1402) in 16S rRNA + S-adenosyl-L-homocysteine + H(+). Functionally, specifically methylates the N4 position of cytidine in position 1402 (C1402) of 16S rRNA. The protein is Ribosomal RNA small subunit methyltransferase H of Baumannia cicadellinicola subsp. Homalodisca coagulata.